Here is a 99-residue protein sequence, read N- to C-terminus: uncharacterized protein (99 aa).

Residues 1-19 (MLGMIRWVVEGTLVAMLLS) form the signal peptide. The tract at residues 71–99 (DGFGRINDSGPKRRGRDQSQYSSRFVELD) is disordered.

The protein localises to the cytoplasm. This is an uncharacterized protein from Saccharomyces cerevisiae (strain ATCC 204508 / S288c) (Baker's yeast).